Reading from the N-terminus, the 648-residue chain is MLYPRAIRLRFACKLTLASVLSLLLGFYFGLPMPRWSALTAALVAAAPAFAAGGEPFSGAIRYRGWLRIIGTVLGSLCALLLMMLLIRAPLLMILLCCLWAGVCTWLSSLVRMENSYALGLSGYTALIIVVSCLGEPQFILQLALERCGEIVLGIVCAVLVDTLLAPRSVKGEVDRVVGGMLLGQLRLLQCCVDGRDGDAIDRSWHRLIRESHTLEEMRASLALESSRWPRACRRLTALHTLSLTLITRACEIFLTQCQTPMALPAPFLALIAAPVDTPEEAYQRLKQLRRLLVAHGEHQLPPALIGWIGGASRLQLLVKGVASNVRIGRYEAATLAHDTAPRPLYSVQGHHALINGLRTWLATSLGALFWLWSGWSAGSGCMIMIAVVTSLAVRTPNPRMAAIDFLMGSLVALPVGALYYTLILPATQQSLVLLCLSLGALTFICGMAVQKRRLGSMGTLASTLNILALSNPMGFPIERFVDSAIGQMVGCLLALVVLLVVHDRSRARTGRALMRHLAFGAVAALRREGTRGNLLPALYRQLLLLLTLFPDDIGRYRLALTLIVLQQRLAHSALPCDAGRLRAIDAAATRLLSGGGSARCSGALLQLTTELGDYADCLARQGIASAVLQPLHQLADVLYRYRSVLLD.

A run of 11 helical transmembrane segments spans residues 11–31, 41–61, 65–87, 91–110, 125–145, 150–170, 369–389, 406–426, 430–450, 458–478, and 481–501; these read FACKLTLASVLSLLLGFYFGL, AALVAAAPAFAAGGEPFSGAI, GWLRIIGTVLGSLCALLLMMLLI, LLMILLCCLWAGVCTWLSSL, TALIIVVSCLGEPQFILQLAL, EIVLGIVCAVLVDTLLAPRSV, LFWLWSGWSAGSGCMIMIAVV, FLMGSLVALPVGALYYTLILP, QSLVLLCLSLGALTFICGMAV, MGTLASTLNILALSNPMGFPI, and FVDSAIGQMVGCLLALVVLLV.

The protein belongs to the aromatic acid exporter ArAE (TC 2.A.85) family.

It is found in the cell inner membrane. In terms of biological role, forms an efflux pump with AaeA. Could function as a metabolic relief valve, allowing to eliminate certain compounds when they accumulate to high levels in the cell. In Edwardsiella ictaluri (strain 93-146), this protein is p-hydroxybenzoic acid efflux pump subunit AaeB.